Consider the following 1480-residue polypeptide: Nonribosomal peptide synthetase inpA (1480 aa).

Low complexity predominate over residues 1–17; it reads MSHSMSSSSSSSSSSSS. Positions 1-24 are disordered; it reads MSHSMSSSSSSSSSSSSSRDEGQS. A condensation region spans residues 44 to 458; that stretch reads VQDVYPCTPL…QLISPQDLDQ (415 aa). The interval 479-871 is adenylation; it reads QRHIDTRPDA…GRKDSQVKIR (393 aa). The region spanning 1003-1082 is the Carrier domain; the sequence is DSTNKVALRL…GLAAMITSPH (80 aa). S1041 is subject to O-(pantetheine 4'-phosphoryl)serine. Positions 1117–1436 are thioesterase (TE) domain; it reads KVFLTGATGL…VLAMLQDPQM (320 aa).

This sequence belongs to the NRP synthetase family.

It functions in the pathway secondary metabolite biosynthesis. In terms of biological role, nonribosomal peptide synthetase; part of the inp gene cluster that mediates the biosynthesis of fellutamide B, a mycotoxin that acts as a proteasome inhibitor. In the first step of fellutabmide B biosynthesis, inpC activates 3-hydroxydodecanoic acid to generate 3-hydroxydodecanoyl-AMP that is then loaded onto the T0 domain of inpB. The 3-hydroxydodecanoyl-S-phosphopantetheinyl-T0 is sequentially extended with L-Asn and L-Gln by the two CAT modules of inpB. The linear lipodipeptide from inpB is then transferred onto inpA for the addition of the third amino acid, L-Leu. Reductive releasing of the lipotripeptide by the TE domain of inpA produces (2S)-fellutamide B. InpF might be involved in the release and transfer of the lipodipeptide from inpB to inpA. The inp cluster-encoded proteasome subunit inpE confers resistance to internally produced fellutamides. The MFS efflux transporter inpD may contribute to fellutamide resistance as well. The polypeptide is Nonribosomal peptide synthetase inpA (Emericella nidulans (strain FGSC A4 / ATCC 38163 / CBS 112.46 / NRRL 194 / M139) (Aspergillus nidulans)).